We begin with the raw amino-acid sequence, 628 residues long: Chaperone protein HtpG (628 aa).

Residues Met-1–Arg-337 are a; substrate-binding. Positions Glu-338–Lys-554 are b. A c region spans residues Met-555–Arg-628.

Belongs to the heat shock protein 90 family. In terms of assembly, homodimer.

It is found in the cytoplasm. In terms of biological role, molecular chaperone. Has ATPase activity. In Francisella tularensis subsp. tularensis (strain WY96-3418), this protein is Chaperone protein HtpG.